Reading from the N-terminus, the 104-residue chain is MYAIIETGGKQFRVKSGDIVKIEKLNIEPGQEVIFDKVLLFKGNEGLKIGNPYIEGVKVKAEVIDEKKDKKVLVYSPPSKKAIHKLKGHRQWYTKIKIKEIVGG.

The protein belongs to the bacterial ribosomal protein bL21 family. As to quaternary structure, part of the 50S ribosomal subunit. Contacts protein L20.

Functionally, this protein binds to 23S rRNA in the presence of protein L20. The sequence is that of Large ribosomal subunit protein bL21 from Thermodesulfovibrio yellowstonii (strain ATCC 51303 / DSM 11347 / YP87).